The primary structure comprises 128 residues: Histone H2A.2 (128 aa).

It belongs to the histone H2A family. In terms of assembly, the nucleosome is a histone octamer containing two molecules each of H2A, H2B, H3 and H4 assembled in one H3-H4 heterotetramer and two H2A-H2B heterodimers. The octamer wraps approximately 147 bp of DNA. In terms of tissue distribution, expressed in the generative cell within the bicellular pollen. Not detected in other reproductive or vegetative tissues.

The protein resides in the nucleus. It localises to the chromosome. In terms of biological role, core component of nucleosome. Nucleosomes wrap and compact DNA into chromatin, limiting DNA accessibility to the cellular machineries which require DNA as a template. Histones thereby play a central role in transcription regulation, DNA repair, DNA replication and chromosomal stability. DNA accessibility is regulated via a complex set of post-translational modifications of histones, also called histone code, and nucleosome remodeling. May be involved in the repression of gene expression in male gametes. The chain is Histone H2A.2 (gH2A) from Lilium longiflorum (Trumpet lily).